Consider the following 300-residue polypeptide: UDP-N-acetylenolpyruvoylglucosamine reductase (300 aa).

One can recognise an FAD-binding PCMH-type domain in the interval 28–193 (KTGGPADVLA…LQATFALEKG (166 aa)). The active site involves R172. S222 serves as the catalytic Proton donor. E292 is a catalytic residue.

The protein belongs to the MurB family. It depends on FAD as a cofactor.

Its subcellular location is the cytoplasm. It catalyses the reaction UDP-N-acetyl-alpha-D-muramate + NADP(+) = UDP-N-acetyl-3-O-(1-carboxyvinyl)-alpha-D-glucosamine + NADPH + H(+). The protein operates within cell wall biogenesis; peptidoglycan biosynthesis. Its function is as follows. Cell wall formation. This chain is UDP-N-acetylenolpyruvoylglucosamine reductase, found in Enterococcus faecalis (strain ATCC 700802 / V583).